The chain runs to 360 residues: (+)-6a-hydroxymaackiain 3-O-methyltransferase 1 (360 aa).

S-adenosyl-L-methionine-binding positions include 202-205 (VAGG), Asp-226, 226-227 (DQ), 246-247 (DM), and Lys-260. The active-site Proton acceptor is His-264.

Belongs to the class I-like SAM-binding methyltransferase superfamily. Cation-independent O-methyltransferase family. COMT subfamily.

It carries out the reaction (+)-6a-hydroxymaackiain + S-adenosyl-L-methionine = (+)-pisatin + S-adenosyl-L-homocysteine + H(+). It catalyses the reaction a 4'-hydroxyisoflavone + S-adenosyl-L-methionine = a 4'-methoxyisoflavone + S-adenosyl-L-homocysteine + H(+). Functionally, methyltransferase involved in the phytoalexin pisatin biosynthesis. Has both 3- and 4'-O-methyltransferase activities. Can use (+)-6a-hydroxymaackiain, 2,7,4'-trihydroxyisoflavanone and with much less activity (+)-medicarpin as substrates, but not (-)-6a-hydroxymaackiain, daidzein, formononetin or isoliquiritigenin. May be involved in formononetin biosynthesis. This is (+)-6a-hydroxymaackiain 3-O-methyltransferase 1 (HMM1) from Pisum sativum (Garden pea).